A 348-amino-acid polypeptide reads, in one-letter code: Dihydroorotate dehydrogenase (quinone) (348 aa).

FMN is bound by residues 65–69 and threonine 89; that span reads AGMDK. Lysine 69 is a substrate binding site. 114-118 serves as a coordination point for substrate; the sequence is NRMGF. 2 residues coordinate FMN: asparagine 143 and asparagine 176. Substrate is bound at residue asparagine 176. Serine 179 functions as the Nucleophile in the catalytic mechanism. Residue asparagine 181 participates in substrate binding. Lysine 221 and threonine 249 together coordinate FMN. 250–251 contacts substrate; that stretch reads NT. FMN contacts are provided by residues glycine 272, glycine 301, and 322–323; that span reads YT.

Belongs to the dihydroorotate dehydrogenase family. Type 2 subfamily. In terms of assembly, monomer. The cofactor is FMN.

It localises to the cell membrane. The catalysed reaction is (S)-dihydroorotate + a quinone = orotate + a quinol. Its pathway is pyrimidine metabolism; UMP biosynthesis via de novo pathway; orotate from (S)-dihydroorotate (quinone route): step 1/1. Functionally, catalyzes the conversion of dihydroorotate to orotate with quinone as electron acceptor. The protein is Dihydroorotate dehydrogenase (quinone) of Akkermansia muciniphila (strain ATCC BAA-835 / DSM 22959 / JCM 33894 / BCRC 81048 / CCUG 64013 / CIP 107961 / Muc).